A 473-amino-acid chain; its full sequence is Uronate isomerase (473 aa).

It belongs to the metallo-dependent hydrolases superfamily. Uronate isomerase family.

It carries out the reaction D-glucuronate = D-fructuronate. The catalysed reaction is aldehydo-D-galacturonate = keto-D-tagaturonate. Its pathway is carbohydrate metabolism; pentose and glucuronate interconversion. The polypeptide is Uronate isomerase (uxaC) (Bacillus subtilis (strain 168)).